Reading from the N-terminus, the 499-residue chain is Lysosomal Pro-X carboxypeptidase (499 aa).

Residues 1-21 (MGRCSLLLLLLLIAFLTPGAA) form the signal peptide. Residues 22 to 47 (NPVSPSLRAPSSLPWSTSFRSRPTIT) constitute a propeptide that is removed on maturation. N103 is a glycosylation site (N-linked (GlcNAc...) asparagine). The Charge relay system role is filled by S181. The interval 196-337 (HLVVGALASS…QNIFQALNVY (142 aa)) is SKS domain. 4 cysteine pairs are disulfide-bonded: C217/C375, C235/C313, C266/C346, and C367/C397. The N-linked (GlcNAc...) asparagine glycan is linked to N234. N-linked (GlcNAc...) asparagine glycans are attached at residues N339 and N348. Residue N418 is glycosylated (N-linked (GlcNAc...) asparagine). Residues D433 and H458 each act as charge relay system in the active site.

The protein belongs to the peptidase S28 family. In terms of assembly, homodimer.

Its subcellular location is the lysosome. It catalyses the reaction Cleavage of a -Pro-|-Xaa bond to release a C-terminal amino acid.. Functionally, cleaves C-terminal amino acids linked to proline in peptides such as angiotensin II, III and des-Arg9-bradykinin. This cleavage occurs at acidic pH, but enzymatic activity is retained with some substrates at neutral pH. The sequence is that of Lysosomal Pro-X carboxypeptidase (PRCP) from Bos taurus (Bovine).